Consider the following 750-residue polypeptide: EF-hand domain-containing family member C2 (750 aa).

DM10 domains lie at 75–182 (DKQV…KKIG), 226–368 (DGKV…RTKY), and 430–537 (ISNI…ENNT). The region spanning 557–592 (SKSREITQVFAAADYNHTKVVPYNTFRDILMSITMG) is the EF-hand domain.

Microtubule inner protein component of sperm flagellar doublet microtubules.

The protein localises to the cytoplasm. Its subcellular location is the cytoskeleton. It is found in the cilium axoneme. It localises to the flagellum axoneme. Microtubule inner protein (MIP) part of the dynein-decorated doublet microtubules (DMTs) in cilia axoneme, which is required for motile cilia beating. The polypeptide is EF-hand domain-containing family member C2 (Efhc2) (Mus musculus (Mouse)).